Here is a 428-residue protein sequence, read N- to C-terminus: Cholecystokinin receptor type A (428 aa).

The Extracellular portion of the chain corresponds to 1 to 41; sequence MEVADSLLGNGSDVPPPCELGLENETLVCLEQPRAAKEWQP. Residues asparagine 10 and asparagine 24 are each glycosylated (N-linked (GlcNAc...) asparagine). A disulfide bridge connects residues cysteine 18 and cysteine 29. A helical membrane pass occupies residues 42-67; that stretch reads AVQILLYSLIFLLSVLGNTLVITVLI. Topologically, residues 68 to 77 are cytoplasmic; that stretch reads RNKRMRTVTN. A helical membrane pass occupies residues 78 to 104; that stretch reads IFLLSLAVSDLMLCLFCMPFNLIPNLL. Topologically, residues 105-115 are extracellular; that stretch reads KDFIFGSAVCK. Cysteine 114 and cysteine 196 are oxidised to a cystine. A helical membrane pass occupies residues 116 to 137; that stretch reads TTTYFMGTSVSVSTFNLVAISL. At 138 to 157 the chain is on the cytoplasmic side; the sequence is ERYGAICKPLQSRVWQTKSH. The helical transmembrane segment at 158–178 threads the bilayer; it reads ALKVIATTWCLSFTIMTPYPI. At 179 to 210 the chain is on the extracellular side; the sequence is YSNLVPFTKTNNQTANMCRFLLPNDVMQQSWH. The N-linked (GlcNAc...) asparagine glycan is linked to asparagine 190. A helical transmembrane segment spans residues 211–234; it reads TFLLLILFLIPGIVMMVAYGLISL. Residues 235–313 are Cytoplasmic-facing; it reads ELYQGIKFDA…NLMAKKRVIR (79 aa). The segment at 250–269 is disordered; sequence ARDRNPSTGSSGRYEDGDGC. A helical membrane pass occupies residues 314–334; sequence MLMVIVVLFFLCWMPIFSANA. At 335 to 349 the chain is on the extracellular side; sequence WRAYDTASAERRLSG. A helical membrane pass occupies residues 350-373; sequence TPISFILLLSYTSSCVNPIIYCFM. At 374 to 428 the chain is on the cytoplasmic side; it reads NKRFRLGFLATFPCCPHPGPPGPRGEVGEEEEGRTTGASLSRYSYSHMSASAPGP. The S-palmitoyl cysteine moiety is linked to residue cysteine 387. Residues 393-428 are disordered; that stretch reads PPGPRGEVGEEEEGRTTGASLSRYSYSHMSASAPGP. The segment covering 409–422 has biased composition (polar residues); sequence TGASLSRYSYSHMS.

Belongs to the G-protein coupled receptor 1 family.

The protein resides in the cell membrane. Receptor for cholecystokinin. Mediates pancreatic growth and enzyme secretion, smooth muscle contraction of the gall bladder and stomach. Has a 1000-fold higher affinity for CCK rather than for gastrin. It modulates feeding and dopamine-induced behavior in the central and peripheral nervous system. This receptor mediates its action by association with G proteins that activate a phosphatidylinositol-calcium second messenger system. The sequence is that of Cholecystokinin receptor type A (CCKAR) from Canis lupus familiaris (Dog).